A 516-amino-acid polypeptide reads, in one-letter code: L-amino-acid oxidase (516 aa).

The first 18 residues, 1–18, serve as a signal peptide directing secretion; the sequence is MNVFFMFSLLFLAALGSC. The cysteines at positions 28 and 189 are disulfide-linked. FAD is bound by residues 61–62, 81–82, R89, and 103–106; these read MA, EA, and GPMR. Residues R106 and H239 each contribute to the substrate site. V279 lines the FAD pocket. C349 and C430 are disulfide-bonded. N-linked (GlcNAc...) asparagine glycosylation occurs at N379. A substrate-binding site is contributed by Y390. FAD-binding positions include E475 and 482-487; that span reads GWIDST. Residue 482–483 coordinates substrate; the sequence is GW.

Belongs to the flavin monoamine oxidase family. FIG1 subfamily. As to quaternary structure, homodimer; non-covalently linked. The cofactor is FAD. As to expression, expressed by the venom gland.

It localises to the secreted. The catalysed reaction is an L-alpha-amino acid + O2 + H2O = a 2-oxocarboxylate + H2O2 + NH4(+). Catalyzes an oxidative deamination of predominantly hydrophobic and aromatic L-amino acids, thus producing hydrogen peroxide that may contribute to the diverse toxic effects of this enzyme. Exhibits diverse biological activities, such as hemolysis, edema, hemorrhage, apoptosis, antibacterial and antiparasitic activities, as well as regulation of platelet aggregation. Effects of snake L-amino oxidases on platelets are controversial, since they either induce aggregation or inhibit agonist-induced aggregation. These different effects are probably due to different experimental conditions. The protein is L-amino-acid oxidase of Crotalus adamanteus (Eastern diamondback rattlesnake).